We begin with the raw amino-acid sequence, 102 residues long: PqqA binding protein (102 aa).

It belongs to the PqqD family. As to quaternary structure, monomer. Interacts with PqqE.

Its pathway is cofactor biosynthesis; pyrroloquinoline quinone biosynthesis. In terms of biological role, functions as a PqqA binding protein and presents PqqA to PqqE, in the pyrroloquinoline quinone (PQQ) biosynthetic pathway. The polypeptide is PqqA binding protein (Rhodopseudomonas palustris (strain HaA2)).